Consider the following 336-residue polypeptide: Dihydroorotate dehydrogenase (quinone) (336 aa).

Residues 62 to 66 (AGLDK) and Thr86 contribute to the FMN site. Residue Lys66 coordinates substrate. 111-115 (NRMGF) is a substrate binding site. Residues Asn139 and Asn172 each contribute to the FMN site. Asn172 contributes to the substrate binding site. Ser175 functions as the Nucleophile in the catalytic mechanism. Asn177 serves as a coordination point for substrate. Positions 217 and 245 each coordinate FMN. 246 to 247 (NT) contacts substrate. FMN is bound by residues Gly268, Gly297, and 318-319 (YS).

Belongs to the dihydroorotate dehydrogenase family. Type 2 subfamily. In terms of assembly, monomer. FMN is required as a cofactor.

It localises to the cell membrane. It catalyses the reaction (S)-dihydroorotate + a quinone = orotate + a quinol. It functions in the pathway pyrimidine metabolism; UMP biosynthesis via de novo pathway; orotate from (S)-dihydroorotate (quinone route): step 1/1. Functionally, catalyzes the conversion of dihydroorotate to orotate with quinone as electron acceptor. This Serratia proteamaculans (strain 568) protein is Dihydroorotate dehydrogenase (quinone).